The primary structure comprises 448 residues: Probable glycine dehydrogenase (decarboxylating) subunit 1 (448 aa).

This sequence belongs to the GcvP family. N-terminal subunit subfamily. The glycine cleavage system is composed of four proteins: P, T, L and H. In this organism, the P 'protein' is a heterodimer of two subunits.

It catalyses the reaction N(6)-[(R)-lipoyl]-L-lysyl-[glycine-cleavage complex H protein] + glycine + H(+) = N(6)-[(R)-S(8)-aminomethyldihydrolipoyl]-L-lysyl-[glycine-cleavage complex H protein] + CO2. Functionally, the glycine cleavage system catalyzes the degradation of glycine. The P protein binds the alpha-amino group of glycine through its pyridoxal phosphate cofactor; CO(2) is released and the remaining methylamine moiety is then transferred to the lipoamide cofactor of the H protein. This is Probable glycine dehydrogenase (decarboxylating) subunit 1 from Geobacillus sp. (strain WCH70).